A 320-amino-acid chain; its full sequence is Mitochondrial fission regulator 1-like-B (320 aa).

The segment at 1 to 37 is disordered; that stretch reads MASLGAAAEPERSLFGKDGAEACESPEGRRSGRRKRT. Over residues 9 to 30 the composition is skewed to basic and acidic residues; the sequence is EPERSLFGKDGAEACESPEGRR.

This sequence belongs to the MTFR1 family.

It is found in the mitochondrion outer membrane. Functionally, mitochondrial protein required for adaptation of miochondrial dynamics to metabolic changes. Regulates mitochondrial morphology at steady state and mediates AMPK-dependent stress-induced mitochondrial fragmentation via the control of OPA1 levels. The chain is Mitochondrial fission regulator 1-like-B (mtfr1l-b) from Xenopus laevis (African clawed frog).